Here is a 200-residue protein sequence, read N- to C-terminus: MTLVPMVVEQTSRGERAYDIYSRLLKERIIFITGPIEDQMASLVVAQLVFLEAENPEKEICMYINSPGGVVTAGLSIYDTMQYIKPKVSTLCLGQAASMGSLLLAAGEPGMRYALPNSRIMIHQPSGGFQGQATDIEIHAKEILDIKSRLNDIYVKHTGRDLPEVVANMERDNFMRAEKAKDFGIIDKVIEKRLDIEESN.

The Nucleophile role is filled by Ser98. The active site involves His123.

The protein belongs to the peptidase S14 family. In terms of assembly, fourteen ClpP subunits assemble into 2 heptameric rings which stack back to back to give a disk-like structure with a central cavity, resembling the structure of eukaryotic proteasomes.

Its subcellular location is the cytoplasm. The enzyme catalyses Hydrolysis of proteins to small peptides in the presence of ATP and magnesium. alpha-casein is the usual test substrate. In the absence of ATP, only oligopeptides shorter than five residues are hydrolyzed (such as succinyl-Leu-Tyr-|-NHMec, and Leu-Tyr-Leu-|-Tyr-Trp, in which cleavage of the -Tyr-|-Leu- and -Tyr-|-Trp bonds also occurs).. Its function is as follows. Cleaves peptides in various proteins in a process that requires ATP hydrolysis. Has a chymotrypsin-like activity. Plays a major role in the degradation of misfolded proteins. The sequence is that of ATP-dependent Clp protease proteolytic subunit from Ehrlichia canis (strain Jake).